The primary structure comprises 306 residues: Foldase protein PrsA (306 aa).

The signal sequence occupies residues 1-20 (MRRKIALFLALIFVGVSLVS). Cys21 carries N-palmitoyl cysteine lipidation. Residue Cys21 is the site of S-diacylglycerol cysteine attachment. The PpiC domain maps to 165–255 (FEVMRARHIL…YGYHIIKSEG (91 aa)).

This sequence belongs to the PrsA family.

It localises to the cell membrane. The enzyme catalyses [protein]-peptidylproline (omega=180) = [protein]-peptidylproline (omega=0). Its function is as follows. Plays a major role in protein secretion by helping the post-translocational extracellular folding of several secreted proteins. This is Foldase protein PrsA from Caldanaerobacter subterraneus subsp. tengcongensis (strain DSM 15242 / JCM 11007 / NBRC 100824 / MB4) (Thermoanaerobacter tengcongensis).